A 1011-amino-acid chain; its full sequence is PE-PGRS family protein PE_PGRS30 (1011 aa).

The PE domain occupies 1–93 (MSFLLVEPDL…AAAYTGAEAA (93 aa)). The tract at residues 130 to 696 (SNAGGNGGPG…GGTGGTGGVL (567 aa)) is PGRS domain. The span at 595–696 (GGAGGTGGDH…GGTGGTGGVL (102 aa)) shows a compositional bias: gly residues. A disordered region spans residues 595–701 (GGAGGTGGDH…TGGVLFGQSG (107 aa)). The tract at residues 697–1011 (FGQSGSSGPP…PTQLAQAIAP (315 aa)) is C-terminal domain.

It belongs to the mycobacterial PE family. PGRS subfamily.

The protein resides in the secreted. It localises to the cell wall. It is found in the cell surface. Functionally, mediates suppression of pro-inflammatory immune response in macrophages via modulation of host cytokine response. Required for full virulence. Involved in inhibition of phago-lysosome fusion. The polypeptide is PE-PGRS family protein PE_PGRS30 (Mycobacterium tuberculosis (strain ATCC 25618 / H37Rv)).